We begin with the raw amino-acid sequence, 131 residues long: Profilin-1 (131 aa).

The protein belongs to the profilin family. Occurs in many kinds of cells as a complex with monomeric actin in a 1:1 ratio.

Its subcellular location is the cytoplasm. The protein resides in the cytoskeleton. Functionally, binds to actin and affects the structure of the cytoskeleton. At high concentrations, profilin prevents the polymerization of actin, whereas it enhances it at low concentrations. By binding to PIP2, it inhibits the formation of IP3 and DG. The polypeptide is Profilin-1 (Hevea brasiliensis (Para rubber tree)).